We begin with the raw amino-acid sequence, 1587 residues long: MKKDGSSGSFGIKASPGSLSRAVSWINFSSLSRQTKRLFRSDGELSVCGHQVEADDENWIYRTQPRKAVSNLDEESRWTVHYTAPWHQQENVFLPATRPPCVEDLHRQAKLNLKSVLRECDKLRQDGCRSSQYYSQGPTFAAGSSPCDDYQDEDTEADRKCSLSSSEEERFIGIRRPKTPTSGDFSDLHTQTNWTKSLPLPTPEEKTRQQAQTVQADVVPINITASATGQDDDGSAHSLYVPDHYSTLGRLDSYRSTGQCLETRDTSCQTEDVKVIPPSMRRIRAHKGVGVAAQMSHLSGSSGNMSVLSDSAGVVFPSRLSNDTGFHSLPRTGPRASTYSLEGRMGALGSTEDTDDTSPYQGGSLQGHENFAHLGGASSTGMLSRPKSQQLRFLESPACVVSPHAAYSTSVIPNATLLSSSEVIVIHTAQSAGQLDSRTPGSSSYSKIKPRDRPTPRCSVKDDHQSPRHHWNEGHLIHSRALASSVPGATTLLSLHDSEVSLNAPANRENGSQAILYHCRNNPSFPDHPSDVDGKSECSYSGDRGCGSSEPWEYKTSSNGRASPLKPHLATPGCSTPTSNVSSCSLDQTSLKGDTRSLCSEDHDGYYTTTHEAGNLYTLSDGLGNPRHSMVNVFDGRAQRSQGDQAAHQDKILSRNISLKKAKKPPLPPSRTDSLRRIPKKNNQTNGQVLNESLIASLQHSLQLSLPGKGGSSPSQSPCSDFEEPWLPRSRSQSIVSEGSSLTSTTTPNVYSLCGVTPSQSDTSSVKSEYTDPWGYYIDYTSLQEDPGNPTGGCSANTEAATGNGPVRHIQEGSRVPVPQVPGCSVRPKIASPEKSQRVTSPSSGYSSQSNTPTALTPVPVFLKSMSPANGKGKAKPKVPERKSSLISSMSISSSSTSLSSNTSTEGSGTMKKLDTTLASALAPPPPPLPPLPSPCLADKSPFLPPPPPLADCSEGSPLPPSPMFPPPPPEALVPFCSPTDGCLSPSPTAVSPSLPRSLPPVPAPPPFLPSSEPPPAPPLDPKLMKENRPFFKNSSQSESSREALRRPANKEEGCRPPMPLITTEALQMVQLRPVRKNSGAGAVLFSEPSAQEQRTPTAPQYHLKPSAFLKSRNSINEMESESQAASVTSSLPMPAKSQSQGDHDSAVERGGLPSCSDGAPGPGPSLRTTLLPDSSPSRKPPPISKKPKLFLVVPPPQRDFTAEPTENGSEAFPGVPSPTRAEGEAVRSQEEKSSPASRAGSHATAPTPGSPALEPGTAGSLSSSIVEANVPMVQPNTSPGPTQEESGENSVDGERNAKSCLSQQGREAGLLEPNTAASSSDPVDVSKEEGSDEVLTPTKPRTTEDLFAAIHRSKRKVLGRKDSEDDHTRNHSPSPPVTPTSAAPNLASPKQVGSIQRSIKKSTTSSDNFKALLLKKGSRSDTSARMSAAEMLKSTDPRFQRSRSEPSADSPDSPSSCSPNKNRRAQEEWAKNEGLMPRSLSFSGPRYSRSRTPPSAASSRYSMRNRIQSSPMTVISEGEGEPAEPADNKARRALDATRVCSLDRLTGQEMDQASLLCSEEPASVDGIGRAEGNGPSEQCGGTEQKS.

Ser24 carries the phosphoserine modification. Disordered regions lie at residues Phe140 to Leu163 and Arg176 to Thr202. The span at Thr179–Lys196 shows a compositional bias: polar residues. A phosphoserine mark is found at Ser197 and Ser328. Over residues Ser431–Ser446 the composition is skewed to polar residues. 2 disordered regions span residues Ser431–His470 and Ser549–Cys584. Residues Lys449–His470 are compositionally biased toward basic and acidic residues. A Phosphoserine modification is found at Ser563. Residues Gly573 to Cys584 are compositionally biased toward polar residues. A Phosphoserine modification is found at Ser629. 3 disordered regions span residues Lys661–Gly687, Ser705–Lys767, and Asn789–Met1059. Residues Ser705–Ser720 show a composition bias toward low complexity. Composition is skewed to polar residues over residues Ser730 to Val750, Thr757 to Lys767, Gly792 to Ala801, and Arg838 to Ala855. A compositionally biased stretch (low complexity) spans Ser885–Met911. Pro residues-rich tracts occupy residues Ala923–Ser934, Pro958–Ala972, and Ser998–Asp1021. The segment covering Ser1040–Cys1055 has biased composition (basic and acidic residues). The residue at position 1079 (Ser1079) is a Phosphoserine. 2 disordered regions span residues Ala1083–Ala1534 and Val1565–Ser1587. 2 stretches are compositionally biased toward polar residues: residues Pro1089–Ala1099 and Ser1112–Gln1141. Ser1157 and Ser1218 each carry phosphoserine. Basic and acidic residues predominate over residues Ala1222 to Ser1234. A compositionally biased stretch (polar residues) spans Gln1275–Glu1285. Positions Gly1360 to Arg1370 are enriched in basic and acidic residues. A phosphoserine mark is found at Ser1373 and Ser1375. Position 1379 is a phosphothreonine (Thr1379). The segment covering Gln1392–Asn1409 has biased composition (polar residues). The segment covering Lys1434 to Pro1447 has biased composition (basic and acidic residues). 2 stretches are compositionally biased toward low complexity: residues Ser1448–Pro1460 and Ser1484–Ser1503. Over residues Pro1576 to Ser1587 the composition is skewed to polar residues.

The protein belongs to the NHS family.

This Mus musculus (Mouse) protein is NHS-like protein 1 (Nhsl1).